Reading from the N-terminus, the 421-residue chain is CinA-like protein (421 aa).

It belongs to the CinA family.

In Mycobacterium sp. (strain MCS), this protein is CinA-like protein.